A 732-amino-acid polypeptide reads, in one-letter code: Elongation factor 2 (732 aa).

The region spanning 19 to 260 (ERIRNMGIAA…MVVRHLPNPL (242 aa)) is the tr-type G domain. GTP is bound by residues 28–35 (AHIDHGKT), 94–98 (DTPGH), and 148–151 (NKVD). H597 is subject to Diphthamide.

This sequence belongs to the TRAFAC class translation factor GTPase superfamily. Classic translation factor GTPase family. EF-G/EF-2 subfamily.

It localises to the cytoplasm. Functionally, catalyzes the GTP-dependent ribosomal translocation step during translation elongation. During this step, the ribosome changes from the pre-translocational (PRE) to the post-translocational (POST) state as the newly formed A-site-bound peptidyl-tRNA and P-site-bound deacylated tRNA move to the P and E sites, respectively. Catalyzes the coordinated movement of the two tRNA molecules, the mRNA and conformational changes in the ribosome. The protein is Elongation factor 2 of Thermococcus onnurineus (strain NA1).